A 129-amino-acid polypeptide reads, in one-letter code: Protein Turandot A2 (129 aa).

A signal peptide spans 1–21; that stretch reads MNSSTSLMCFALLLISPLCMG. Residue asparagine 49 is glycosylated (N-linked (GlcNAc...) asparagine).

The protein belongs to the Turandot family.

The protein localises to the secreted. Its function is as follows. A humoral factor that plays a role in stress tolerance; gives increased resistance to the lethal effects of bacterial challenge and stress. Regulated by the JAK/STAT pathway and NF-KB-like Relish pathway in the fat body, upd3 in the hemocytes and Mekk1 in response to septic injury and consequent immune response. This is Protein Turandot A2 (TotA2) from Drosophila simulans (Fruit fly).